Reading from the N-terminus, the 236-residue chain is Potassium/proton antiporter CemA (236 aa).

The next 4 helical transmembrane spans lie at 18–38 (YIIS…FLVL), 114–134 (IAHV…LINA), 161–181 (LILF…KILI), and 196–216 (FIFL…KYWI).

The protein belongs to the CemA family.

It localises to the plastid. The protein resides in the chloroplast inner membrane. The catalysed reaction is K(+)(in) + H(+)(out) = K(+)(out) + H(+)(in). Functionally, contributes to K(+)/H(+) antiport activity by supporting proton efflux to control proton extrusion and homeostasis in chloroplasts in a light-dependent manner to modulate photosynthesis. Prevents excessive induction of non-photochemical quenching (NPQ) under continuous-light conditions. Indirectly promotes efficient inorganic carbon uptake into chloroplasts. The chain is Potassium/proton antiporter CemA from Mesostigma viride (Green alga).